The following is a 359-amino-acid chain: Nicotinate-nucleotide--dimethylbenzimidazole phosphoribosyltransferase (359 aa).

Glu-318 (proton acceptor) is an active-site residue.

This sequence belongs to the CobT family. In terms of assembly, homodimer.

The enzyme catalyses 5,6-dimethylbenzimidazole + nicotinate beta-D-ribonucleotide = alpha-ribazole 5'-phosphate + nicotinate + H(+). The protein operates within nucleoside biosynthesis; alpha-ribazole biosynthesis; alpha-ribazole from 5,6-dimethylbenzimidazole: step 1/2. Functionally, catalyzes the synthesis of alpha-ribazole-5'-phosphate from nicotinate mononucleotide (NAMN) and 5,6-dimethylbenzimidazole (DMB). The sequence is that of Nicotinate-nucleotide--dimethylbenzimidazole phosphoribosyltransferase from Escherichia coli O17:K52:H18 (strain UMN026 / ExPEC).